Reading from the N-terminus, the 143-residue chain is Synuclein (143 aa).

3 repeat units span residues 20 to 30 (EKTKQGVQDAA), 31 to 41 (EKTKQGVQDAA), and 42 to 52 (EKTKEGVMYVG). Residues 20–78 (EKTKQGVQDAAEKTKQGVQDAAEKTKEGVMYVGTKTKEGVVQSVNTVTEKTKEQANVVG) form a 5 X 11 AA tandem repeats of [EGST]-K-T-K-[EQ]-[GQ]-[VA]-X(4) region. A 4; approximate repeat occupies 53–67 (TKTKEGVVQSVNTVT). Residues 68–78 (EKTKEQANVVG) form repeat 5. Positions 113-143 (REIPAEQVAEGKQTTQEPLVEATEATEETGK) are disordered.

Belongs to the synuclein family. Nervous system tissue. Found in the electric lobe, the brain and the spinal cord.

It is found in the nucleus. Functionally, may have a role in synaptic regulation or signal transduction. This Tetronarce californica (Pacific electric ray) protein is Synuclein.